Reading from the N-terminus, the 348-residue chain is 3-isopropylmalate dehydrogenase (348 aa).

76–87 (GPKWTDPNNRPE) contributes to the NAD(+) binding site. Residues Arg-94, Arg-104, Arg-132, and Asp-217 each contribute to the substrate site. Asp-217, Asp-241, and Asp-245 together coordinate Mg(2+). An NAD(+)-binding site is contributed by 275-287 (GSAPDIAGKNVAN).

The protein belongs to the isocitrate and isopropylmalate dehydrogenases family. LeuB type 1 subfamily. Homodimer. Requires Mg(2+) as cofactor. Mn(2+) is required as a cofactor.

The protein localises to the cytoplasm. It catalyses the reaction (2R,3S)-3-isopropylmalate + NAD(+) = 4-methyl-2-oxopentanoate + CO2 + NADH. The protein operates within amino-acid biosynthesis; L-leucine biosynthesis; L-leucine from 3-methyl-2-oxobutanoate: step 3/4. In terms of biological role, catalyzes the oxidation of 3-carboxy-2-hydroxy-4-methylpentanoate (3-isopropylmalate) to 3-carboxy-4-methyl-2-oxopentanoate. The product decarboxylates to 4-methyl-2 oxopentanoate. The protein is 3-isopropylmalate dehydrogenase of Staphylococcus aureus (strain bovine RF122 / ET3-1).